Reading from the N-terminus, the 316-residue chain is Probable tRNA-dihydrouridine synthase (316 aa).

FMN-binding positions include 12 to 14 (PMA) and glutamine 65. Cysteine 96 (proton donor) is an active-site residue. FMN is bound by residues lysine 138, 197–199 (SGD), and 221–222 (GR).

This sequence belongs to the Dus family. Requires FMN as cofactor.

It carries out the reaction a 5,6-dihydrouridine in tRNA + NAD(+) = a uridine in tRNA + NADH + H(+). The enzyme catalyses a 5,6-dihydrouridine in tRNA + NADP(+) = a uridine in tRNA + NADPH + H(+). Catalyzes the synthesis of 5,6-dihydrouridine (D), a modified base found in the D-loop of most tRNAs, via the reduction of the C5-C6 double bond in target uridines. This Aquifex aeolicus (strain VF5) protein is Probable tRNA-dihydrouridine synthase (dus).